The sequence spans 348 residues: NADH-quinone oxidoreductase subunit H 1 (348 aa).

The next 8 helical transmembrane spans lie at Ile11–Val31, Phe83–Ile103, Val136–Gly156, Ser172–Leu192, Gly208–Ala228, Met268–Phe288, Leu289–Ile309, and Leu324–Val344.

Belongs to the complex I subunit 1 family. NDH-1 is composed of 14 different subunits. Subunits NuoA, H, J, K, L, M, N constitute the membrane sector of the complex.

It localises to the cell inner membrane. It carries out the reaction a quinone + NADH + 5 H(+)(in) = a quinol + NAD(+) + 4 H(+)(out). In terms of biological role, NDH-1 shuttles electrons from NADH, via FMN and iron-sulfur (Fe-S) centers, to quinones in the respiratory chain. The immediate electron acceptor for the enzyme in this species is believed to be ubiquinone. Couples the redox reaction to proton translocation (for every two electrons transferred, four hydrogen ions are translocated across the cytoplasmic membrane), and thus conserves the redox energy in a proton gradient. This subunit may bind ubiquinone. In Geobacter sulfurreducens (strain ATCC 51573 / DSM 12127 / PCA), this protein is NADH-quinone oxidoreductase subunit H 1.